A 417-amino-acid chain; its full sequence is Hyaluronidase-3 (417 aa).

The first 20 residues, 1–20 (MTTQLGPALVLGVALCLGCG), serve as a signal peptide directing secretion. 5 disulfides stabilise this stretch: Cys42–Cys331, Cys205–Cys220, Cys356–Cys367, Cys361–Cys395, and Cys397–Cys406. Asn69 is a glycosylation site (N-linked (GlcNAc...) asparagine). The Proton donor role is filled by Glu129. N-linked (GlcNAc...) asparagine glycosylation occurs at Asn215. Residues 352–407 (AAMACSHQRCHGHGRCARRDPGQMEAFLHLWPDGSLGDWKSFSCHCYWGWAGPTCQ) enclose the EGF-like domain.

Belongs to the glycosyl hydrolase 56 family. In terms of processing, N-glycosylated. As to expression, expressed in sperm. Highly expressed in epidermis of the skin, where it is expressed intracellularily in the deep horny layer (at protein level). Bone marrow, testis and kidney.

The protein resides in the secreted. It localises to the cell membrane. Its subcellular location is the cytoplasmic vesicle. It is found in the secretory vesicle. The protein localises to the acrosome. The protein resides in the endoplasmic reticulum. It localises to the early endosome. The catalysed reaction is Random hydrolysis of (1-&gt;4)-linkages between N-acetyl-beta-D-glucosamine and D-glucuronate residues in hyaluronate.. Facilitates sperm penetration into the layer of cumulus cells surrounding the egg by digesting hyaluronic acid. Involved in induction of the acrosome reaction in the sperm. Involved in follicular atresia, the breakdown of immature ovarian follicles that are not selected to ovulate. Induces ovarian granulosa cell apoptosis, possibly via apoptotic signaling pathway involving CASP8 and CASP3 activation, and poly(ADP-ribose) polymerase (PARP) cleavage. Has no hyaluronidase activity in embryonic fibroblasts in vitro. Has no hyaluronidase activity in granulosa cells in vitro. This is Hyaluronidase-3 (HYAL3) from Homo sapiens (Human).